Here is a 239-residue protein sequence, read N- to C-terminus: Ribose-5-phosphate isomerase A (239 aa).

Substrate is bound by residues Ser-40–Thr-43, Asp-96–Asp-99, and Lys-110–Gly-113. Glu-119 functions as the Proton acceptor in the catalytic mechanism. Lys-137 contributes to the substrate binding site.

The protein belongs to the ribose 5-phosphate isomerase family. Homodimer.

It catalyses the reaction aldehydo-D-ribose 5-phosphate = D-ribulose 5-phosphate. It functions in the pathway carbohydrate degradation; pentose phosphate pathway; D-ribose 5-phosphate from D-ribulose 5-phosphate (non-oxidative stage): step 1/1. In terms of biological role, catalyzes the reversible conversion of ribose-5-phosphate to ribulose 5-phosphate. This Methanococcus maripaludis (strain C5 / ATCC BAA-1333) protein is Ribose-5-phosphate isomerase A.